The following is a 320-amino-acid chain: Eukaryotic translation initiation factor 3 subunit G (320 aa).

A disordered region spans residues 1–25; that stretch reads MPTGDFDSKPSWADQVEEEGEDDKC. 2 positions are modified to phosphoserine: serine 8 and serine 11. Threonine 38 and threonine 41 each carry phosphothreonine. Residues serine 42, serine 189, serine 223, and serine 264 each carry the phosphoserine modification. Residues 209 to 234 are disordered; that stretch reads KTGKYVPPSLRDGASRRGESMQPNRR. Basic and acidic residues predominate over residues 221–234; it reads GASRRGESMQPNRR. Residues 239 to 317 form the RRM domain; sequence ATIRVTNLSE…LILNVEWAKP (79 aa).

It belongs to the eIF-3 subunit G family. In terms of assembly, component of the eukaryotic translation initiation factor 3 (eIF-3) complex, which is composed of 13 subunits: EIF3A, EIF3B, EIF3C, EIF3D, EIF3E, EIF3F, EIF3G, EIF3H, EIF3I, EIF3J, EIF3K, EIF3L and EIF3M. The eIF-3 complex appears to include 3 stable modules: module A is composed of EIF3A, EIF3B, EIF3G and EIF3I; module B is composed of EIF3F, EIF3H, and EIF3M; and module C is composed of EIF3C, EIF3D, EIF3E, EIF3K and EIF3L. EIF3C of module C binds EIF3B of module A and EIF3H of module B, thereby linking the three modules. EIF3J is a labile subunit that binds to the eIF-3 complex via EIF3B. The eIF-3 complex interacts with RPS6KB1 under conditions of nutrient depletion. Mitogenic stimulation leads to binding and activation of a complex composed of FRAP1 and RAPTOR, leading to phosphorylation and release of RPS6KB1 and binding of EIF4B to eIF-3. Interacts (via C-terminus) with AIFM1 (via N-terminus). Interacts with DHX33; the interaction is independent of RNA. Phosphorylated. Phosphorylation is enhanced upon serum stimulation.

It is found in the cytoplasm. Its subcellular location is the nucleus. The protein localises to the perinuclear region. Functionally, RNA-binding component of the eukaryotic translation initiation factor 3 (eIF-3) complex, which is required for several steps in the initiation of protein synthesis. The eIF-3 complex associates with the 40S ribosome and facilitates the recruitment of eIF-1, eIF-1A, eIF-2:GTP:methionyl-tRNAi and eIF-5 to form the 43S pre-initiation complex (43S PIC). The eIF-3 complex stimulates mRNA recruitment to the 43S PIC and scanning of the mRNA for AUG recognition. The eIF-3 complex is also required for disassembly and recycling of post-termination ribosomal complexes and subsequently prevents premature joining of the 40S and 60S ribosomal subunits prior to initiation. The eIF-3 complex specifically targets and initiates translation of a subset of mRNAs involved in cell proliferation, including cell cycling, differentiation and apoptosis, and uses different modes of RNA stem-loop binding to exert either translational activation or repression. This subunit can bind 18S rRNA. This chain is Eukaryotic translation initiation factor 3 subunit G, found in Bos taurus (Bovine).